The chain runs to 114 residues: Protein Tat (114 aa).

Positions 1–24 (MDPVDPEVPPWHHPGSQPQIPCNN) are interaction with human CREBBP. Residues 1–48 (MDPVDPEVPPWHHPGSQPQIPCNNCYCKRCCYHCYVCFVRKGLGISYG) are transactivation. Residues C22, C25, and C27 each contribute to the Zn(2+) site. The segment at 22 to 37 (CNNCYCKRCCYHCYVC) is cysteine-rich. N6-acetyllysine; by host PCAF is present on K28. Residues C30, H33, C34, and C37 each coordinate Zn(2+). The interval 38-48 (FVRKGLGISYG) is core. The tract at residues 48–114 (GRKKRGRPAA…CHCCTRTSEQ (67 aa)) is disordered. The Nuclear localization signal, RNA-binding (TAR), and protein transduction motif lies at 49–56 (RKKRGRPA). Residues 49-84 (RKKRGRPAAASHPDHKDPVPKQSPTITKRKQERQEE) form an interaction with the host capping enzyme RNGTT region. Residues K50 and K51 each carry the N6-acetyllysine; by host EP300 and GCN5L2 modification. R52 is modified (asymmetric dimethylarginine; by host PRMT6). K69 participates in a covalent cross-link: Glycyl lysine isopeptide (Lys-Gly) (interchain with G-Cter in ubiquitin).

The protein belongs to the lentiviruses Tat family. In terms of assembly, interacts with host CCNT1. Associates with the P-TEFb complex composed at least of Tat, P-TEFb (CDK9 and CCNT1), TAR RNA, RNA Pol II. Recruits the HATs CREBBP, TAF1/TFIID, EP300, PCAF and GCN5L2. Interacts with host KAT5/Tip60; this interaction targets the latter to degradation. Interacts with the host deacetylase SIRT1. Interacts with host capping enzyme RNGTT; this interaction stimulates RNGTT. Binds to host KDR, and to the host integrins ITGAV/ITGB3 and ITGA5/ITGB1. Interacts with host KPNB1/importin beta-1 without previous binding to KPNA1/importin alpha-1. Interacts with EIF2AK2. Interacts with host nucleosome assembly protein NAP1L1; this interaction may be required for the transport of Tat within the nucleus, since the two proteins interact at the nuclear rim. Interacts with host C1QBP/SF2P32; this interaction involves lysine-acetylated Tat. Interacts with the host chemokine receptors CCR2, CCR3 and CXCR4. Interacts with host DPP4/CD26; this interaction may trigger an anti-proliferative effect. Interacts with host LDLR. Interacts with the host extracellular matrix metalloproteinase MMP1. Interacts with host PRMT6; this interaction mediates Tat's methylation. Interacts with, and is ubiquitinated by MDM2/Hdm2. Interacts with host PSMC3 and HTATIP2. Interacts with STAB1; this interaction may overcome SATB1-mediated repression of IL2 and IL2RA (interleukin) in T cells by binding to the same domain than HDAC1. Interacts (when acetylated) with human CDK13, thereby increasing HIV-1 mRNA splicing and promoting the production of the doubly spliced HIV-1 protein Nef. Interacts with host TBP; this interaction modulates the activity of transcriptional pre-initiation complex. Interacts with host RELA. Interacts with host PLSCR1; this interaction negatively regulates Tat transactivation activity by altering its subcellular distribution. Post-translationally, asymmetrical arginine methylation by host PRMT6 seems to diminish the transactivation capacity of Tat and affects the interaction with host CCNT1. Acetylation by EP300, CREBBP, GCN5L2/GCN5 and PCAF regulates the transactivation activity of Tat. EP300-mediated acetylation of Lys-50 promotes dissociation of Tat from the TAR RNA through the competitive binding to PCAF's bromodomain. In addition, the non-acetylated Tat's N-terminus can also interact with PCAF. PCAF-mediated acetylation of Lys-28 enhances Tat's binding to CCNT1. Lys-50 is deacetylated by SIRT1. In terms of processing, polyubiquitination by host MDM2 does not target Tat to degradation, but activates its transactivation function and fosters interaction with CCNT1 and TAR RNA. Post-translationally, phosphorylated by EIF2AK2 on serine and threonine residues adjacent to the basic region important for TAR RNA binding and function. Phosphorylation of Tat by EIF2AK2 is dependent on the prior activation of EIF2AK2 by dsRNA.

It is found in the host nucleus. Its subcellular location is the host nucleolus. The protein localises to the host cytoplasm. The protein resides in the secreted. Transcriptional activator that increases RNA Pol II processivity, thereby increasing the level of full-length viral transcripts. Recognizes a hairpin structure at the 5'-LTR of the nascent viral mRNAs referred to as the transactivation responsive RNA element (TAR) and recruits the cyclin T1-CDK9 complex (P-TEFb complex) that will in turn hyperphosphorylate the RNA polymerase II to allow efficient elongation. The CDK9 component of P-TEFb and other Tat-activated kinases hyperphosphorylate the C-terminus of RNA Pol II that becomes stabilized and much more processive. Other factors such as HTATSF1/Tat-SF1, SUPT5H/SPT5, and HTATIP2 are also important for Tat's function. Besides its effect on RNA Pol II processivity, Tat induces chromatin remodeling of proviral genes by recruiting the histone acetyltransferases (HATs) CREBBP, EP300 and PCAF to the chromatin. This also contributes to the increase in proviral transcription rate, especially when the provirus integrates in transcriptionally silent region of the host genome. To ensure maximal activation of the LTR, Tat mediates nuclear translocation of NF-kappa-B by interacting with host RELA. Through its interaction with host TBP, Tat may also modulate transcription initiation. Tat can reactivate a latently infected cell by penetrating in it and transactivating its LTR promoter. In the cytoplasm, Tat is thought to act as a translational activator of HIV-1 mRNAs. In terms of biological role, extracellular circulating Tat can be endocytosed by surrounding uninfected cells via the binding to several surface receptors such as CD26, CXCR4, heparan sulfate proteoglycans (HSPG) or LDLR. Neurons are rarely infected, but they internalize Tat via their LDLR. Through its interaction with nuclear HATs, Tat is potentially able to control the acetylation-dependent cellular gene expression. Modulates the expression of many cellular genes involved in cell survival, proliferation or in coding for cytokines or cytokine receptors. Tat plays a role in T-cell and neurons apoptosis. Tat induced neurotoxicity and apoptosis probably contribute to neuroAIDS. Circulating Tat also acts as a chemokine-like and/or growth factor-like molecule that binds to specific receptors on the surface of the cells, affecting many cellular pathways. In the vascular system, Tat binds to ITGAV/ITGB3 and ITGA5/ITGB1 integrins dimers at the surface of endothelial cells and competes with bFGF for heparin-binding sites, leading to an excess of soluble bFGF. This chain is Protein Tat, found in Homo sapiens (Human).